Here is a 668-residue protein sequence, read N- to C-terminus: GTP-binding protein 1 (668 aa).

The segment at 1–32 is disordered; it reads MAAERSRSPVDSPVPASMFAPEPSSPGAARAA. Ser-6, Ser-8, Ser-12, Ser-24, Ser-25, Ser-44, Ser-47, and Ser-69 each carry phosphoserine. One can recognise a tr-type G domain in the interval 158–389; sequence FLEVRVAVVG…LNLLSPRTSY (232 aa). The interval 167 to 174 is G1; it reads GNVDAGKS. 167–174 is a binding site for GTP; it reads GNVDAGKS. The interval 206 to 210 is G2; the sequence is GRTSS. Positions 252 to 255 are G3; the sequence is DLAG. Residues 252–256 and 308–311 each bind GTP; these read DLAGH and TKID. The segment at 308-311 is G4; the sequence is TKID. The G5 stretch occupies residues 366–368; sequence SNV. The segment covering 573–595 has biased composition (polar residues); that stretch reads LLQTTNNSPMNSKPQQIKMQSTK. The disordered stretch occupies residues 573-668; sequence LLQTTNNSPM…GACVTPASGC (96 aa). Ser-580 carries the post-translational modification Phosphoserine. The segment covering 609 to 619 has biased composition (low complexity); sequence GVPAAGGPPTG. Positions 624-637 are enriched in polar residues; sequence SLGTAQAASTSGLQ. A compositionally biased stretch (basic residues) spans 646–657; it reads GRRRGGQRHKVK.

Belongs to the TRAFAC class translation factor GTPase superfamily. Classic translation factor GTPase family. GTPBP1 subfamily. Interacts with EXOSC2/RRP4, EXOSC3/RRP40, EXOSC5/RRP46, HNRNPD, HNRNPR and SYNCRIP. Identified in a complex with AANAT mRNA, but does not bind mRNA by itself. As to expression, detected in some neurons in the brain cortex. Detected in small arteries, dendritic cells and macrophages in the thymus. Detected in lung bronchi, in bronchial epithelial cells and in bronchial smooth muscle cells. Detected in smooth muscle cells in a broad range of organs (at protein level). Expressed in brain, thymus, lung, and kidney.

It localises to the cytoplasm. In terms of biological role, promotes degradation of target mRNA species. Plays a role in the regulation of circadian mRNA stability. Binds GTP and has GTPase activity. In Mus musculus (Mouse), this protein is GTP-binding protein 1 (Gtpbp1).